Consider the following 259-residue polypeptide: Protein BEAN1 (259 aa).

A helical membrane pass occupies residues 36–56; that stretch reads VLVASAVIGVVIILSCITIIV. The span at 71-89 shows a compositional bias: basic residues; sequence RHRHHRHHHHHHHHRRRRH. Disordered regions lie at residues 71–91 and 152–259; these read RHRH…RHRE and VGPG…ERIV. Over residues 171–187 the composition is skewed to polar residues; sequence LTDSCPTLDGTSDSGSG. Over residues 221–230 the composition is skewed to low complexity; it reads GAGPPSGLLP.

Interacts with NEDD4.

It localises to the membrane. In Homo sapiens (Human), this protein is Protein BEAN1 (BEAN1).